A 982-amino-acid polypeptide reads, in one-letter code: Capsid protein (982 aa).

Disordered stretches follow at residues 592-613 (VFRS…RWLT) and 628-655 (EPPA…HEEE). The segment covering 597 to 613 (PRRESTTTTDDSPRWLT) has biased composition (basic and acidic residues). A compositionally biased stretch (polar residues) spans 635-649 (GRSSSPVTSSISEGT).

As to quaternary structure, homomultimer.

It is found in the virion. Functionally, capsid protein self-assembles to form an icosahedral capsid with a T=1 symmetry, about 35-40 nm in diameter. In Penicillium chrysogenum virus (isolate Caston/2003) (PcV), this protein is Capsid protein (p2).